The following is a 499-amino-acid chain: Cytochrome P450 2M1 (499 aa).

C441 lines the heme pocket.

Belongs to the cytochrome P450 family. The cofactor is heme. In kidney and in liver from juvenile and sexually mature trout from both sexes.

Its subcellular location is the endoplasmic reticulum membrane. It localises to the microsome membrane. It catalyses the reaction an organic molecule + reduced [NADPH--hemoprotein reductase] + O2 = an alcohol + oxidized [NADPH--hemoprotein reductase] + H2O + H(+). Functionally, has (omega-6)-hydroxylation activity toward lauric acid. This chain is Cytochrome P450 2M1 (cyp2m1), found in Oncorhynchus mykiss (Rainbow trout).